A 38-amino-acid polypeptide reads, in one-letter code: Alpha-conotoxin LvIC (38 aa).

The propeptide occupies 1 to 21; the sequence is SNGRNAAAGDKPSYWITLAIT. 2 disulfides stabilise this stretch: Cys23/Cys29 and Cys24/Cys34. The residue at position 35 (Gln35) is a Glutamine amide.

This sequence belongs to the conotoxin A superfamily. The two analogs ([DelQ14]LvIC and [D1G,DelQ14]LvIC) are amidated at their N-terminal Cys. As to expression, expressed by the venom gland.

Its subcellular location is the secreted. In terms of biological role, alpha-conotoxins bind to the nicotinic acetylcholine receptors (nAChR) and inhibit them. This synthetic peptide inhibits rat alpha-6/alpha-3-beta-4 nAChR (IC(50)=3.3 uM). The sequence is that of Alpha-conotoxin LvIC from Conus lividus (Livid cone).